We begin with the raw amino-acid sequence, 417 residues long: MKFTELTVKEFENFVQNPSLESHYFQVKENIAIRESDGFQVVLLGVKDDDNRVIAASLFSKIPTMGSYVYYSNRGPVMDYSDLGLVDFYLKELDKYLHQHQCLYVKLDPYWLYQVYDKDINPLTEKNDALVNLFKSHGYDHHGFTTQYDSSSQVRWMGVLDLEGKTPASLRKEFDSQRKRNINKAINYGVKVRFLSKDEFDLFLDLYRETEARTGFASKTDDYFYNFIEHYGDKVLVPLAYIDLNEYIQHLQESLNDKENRRDDMMAKENKTDKQLKKIAELDKQIDHDKKELLQASELRQTDGEILNLASGVYFANAYEVNYFSGGSSEKYNQYMGPYAMHWHMINYCFDNGYDRYNFYGLSGDFTENSEDYGVYRFKRGFNVRIEELIGDFYKPINKVKYWLFNTLDRIRNKLKK.

It belongs to the FemABX family.

The protein localises to the cytoplasm. The enzyme catalyses MurNAc-L-Ala-D-isoglutaminyl-L-Lys-(N(6)-tri-Gly)-D-Ala-D-Ala-diphospho-di-trans,octa-cis-undecaprenyl-GlcNAc + 2 glycyl-tRNA(Gly) = MurNAc-L-Ala-D-isoglutaminyl-L-Lys-(N(6)-penta-Gly)-D-Ala-D-Ala-diphospho-di-trans,octa-cis-undecaprenyl-GlcNAc + 2 tRNA(Gly) + 2 H(+). In terms of biological role, catalyzes the incorporation of amino acid(s) into the interchain peptide bridge of peptidoglycan, using aminoacyl-tRNA as amino acid donor. This is Aminoacyltransferase FemB (femB) from Staphylococcus epidermidis (strain ATCC 12228 / FDA PCI 1200).